Here is a 556-residue protein sequence, read N- to C-terminus: Urocanate hydratase (556 aa).

NAD(+)-binding positions include 52–53 (GG), Gln130, 176–178 (GMG), Glu196, Arg201, 242–243 (NA), 263–267 (QTSAH), 273–274 (YL), and Tyr322. The active site involves Cys410. Gly492 serves as a coordination point for NAD(+).

The protein belongs to the urocanase family. The cofactor is NAD(+).

The protein localises to the cytoplasm. It carries out the reaction 4-imidazolone-5-propanoate = trans-urocanate + H2O. The protein operates within amino-acid degradation; L-histidine degradation into L-glutamate; N-formimidoyl-L-glutamate from L-histidine: step 2/3. Functionally, catalyzes the conversion of urocanate to 4-imidazolone-5-propionate. The protein is Urocanate hydratase of Shewanella frigidimarina (strain NCIMB 400).